The chain runs to 720 residues: Connector enhancer of kinase suppressor of ras 1 (720 aa).

In terms of domain architecture, SAM spans 7–70 (WTPGKVATWL…LGGVEQLQAL (64 aa)). The region spanning 78–164 (NLQSLTEGLL…QVLHEDGPAA (87 aa)) is the CRIC domain. A PDZ domain is found at 196 to 285 (KAVLEQVQLD…GLSLVLKKIP (90 aa)). Residues 285–390 (PIPETPPQTP…RKKSKGLATR (106 aa)) form a disordered region. Residues 304–317 (RSPSLSLAPLSPRA) show a composition bias toward low complexity. Serine 307 and serine 314 each carry phosphoserine. The span at 348–359 (EPLPIPPEPPAI) shows a compositional bias: pro residues. A compositionally biased stretch (basic residues) spans 379-390 (VGRKKSKGLATR). One can recognise a PH domain in the interval 403–502 (RPDCDGWLLL…WVRHLITCIS (100 aa)). Residues 504-573 (YQSPGRAPPP…TSFGSLTDSS (70 aa)) are disordered. A compositionally biased stretch (acidic residues) spans 518 to 530 (CYSETEAEDPDDE). Residues 533–546 (SHSASPSPAQAGSP) are compositionally biased toward low complexity. Residues 553 to 571 (PAATPTQRSPRTSFGSLTD) are compositionally biased toward polar residues. Residues 615-646 (QLNERVHRVRALQSTLKAKLQELQVLEEVLGD) are a coiled coil. The disordered stretch occupies residues 676-720 (QAEGSSHILTSDSTEQSPHSLPSDPEEHSHLCPLTSESSLRPPDL). Positions 678-695 (EGSSHILTSDSTEQSPHS) are enriched in polar residues.

The protein belongs to the CNKSR family. As to quaternary structure, interacts with RHO and RALGDS. Post-translationally, phosphorylated on tyrosine.

Its subcellular location is the cytoplasm. It localises to the membrane. In terms of biological role, may function as an adapter protein or regulator of Ras signaling pathways. The chain is Connector enhancer of kinase suppressor of ras 1 (CNKSR1) from Homo sapiens (Human).